The sequence spans 412 residues: Multifunctional CCA protein (412 aa).

Gly-8 and Arg-11 together coordinate ATP. Gly-8 and Arg-11 together coordinate CTP. Mg(2+)-binding residues include Asp-21 and Asp-23. ATP-binding residues include Arg-91, Arg-137, and Arg-140. Arg-91, Arg-137, and Arg-140 together coordinate CTP. The 102-residue stretch at 228–329 folds into the HD domain; it reads TGIHTLMTLS…VKLFDSIDAW (102 aa).

This sequence belongs to the tRNA nucleotidyltransferase/poly(A) polymerase family. Bacterial CCA-adding enzyme type 1 subfamily. In terms of assembly, monomer. Can also form homodimers and oligomers. Requires Mg(2+) as cofactor. Ni(2+) is required as a cofactor.

It carries out the reaction a tRNA precursor + 2 CTP + ATP = a tRNA with a 3' CCA end + 3 diphosphate. It catalyses the reaction a tRNA with a 3' CCA end + 2 CTP + ATP = a tRNA with a 3' CCACCA end + 3 diphosphate. Catalyzes the addition and repair of the essential 3'-terminal CCA sequence in tRNAs without using a nucleic acid template. Adds these three nucleotides in the order of C, C, and A to the tRNA nucleotide-73, using CTP and ATP as substrates and producing inorganic pyrophosphate. tRNA 3'-terminal CCA addition is required both for tRNA processing and repair. Also involved in tRNA surveillance by mediating tandem CCA addition to generate a CCACCA at the 3' terminus of unstable tRNAs. While stable tRNAs receive only 3'-terminal CCA, unstable tRNAs are marked with CCACCA and rapidly degraded. The polypeptide is Multifunctional CCA protein (Escherichia coli O8 (strain IAI1)).